A 691-amino-acid polypeptide reads, in one-letter code: Gex-3-interacting protein 13 (691 aa).

Disordered stretches follow at residues 18-97 and 171-195; these read TASL…SAHL and PASP…KRQR. The segment covering 31–46 has biased composition (low complexity); that stretch reads SSFTTTSESTSPPYSS. Residues 47 to 57 show a composition bias toward basic and acidic residues; sequence SEHHSPTDQRT. Residues 58 to 79 show a composition bias toward polar residues; that stretch reads ETPTSDSGNASFSPENVATSFE. The span at 171 to 183 shows a compositional bias: low complexity; sequence PASPCTTAASAPS. 2 BED-type zinc fingers span residues 194–242 and 424–473; these read QRRN…YEKV and LRRH…YEKV. Cys212, Cys215, His230, His235, Cys443, Cys446, His461, and His466 together coordinate Zn(2+).

In terms of assembly, interacts with gex-3.

This chain is Gex-3-interacting protein 13 (gei-13), found in Caenorhabditis elegans.